Here is a 95-residue protein sequence, read N- to C-terminus: Aspartyl/glutamyl-tRNA(Asn/Gln) amidotransferase subunit C (95 aa).

It belongs to the GatC family. As to quaternary structure, heterotrimer of A, B and C subunits.

The enzyme catalyses L-glutamyl-tRNA(Gln) + L-glutamine + ATP + H2O = L-glutaminyl-tRNA(Gln) + L-glutamate + ADP + phosphate + H(+). It carries out the reaction L-aspartyl-tRNA(Asn) + L-glutamine + ATP + H2O = L-asparaginyl-tRNA(Asn) + L-glutamate + ADP + phosphate + 2 H(+). Its function is as follows. Allows the formation of correctly charged Asn-tRNA(Asn) or Gln-tRNA(Gln) through the transamidation of misacylated Asp-tRNA(Asn) or Glu-tRNA(Gln) in organisms which lack either or both of asparaginyl-tRNA or glutaminyl-tRNA synthetases. The reaction takes place in the presence of glutamine and ATP through an activated phospho-Asp-tRNA(Asn) or phospho-Glu-tRNA(Gln). The protein is Aspartyl/glutamyl-tRNA(Asn/Gln) amidotransferase subunit C of Methylobacterium radiotolerans (strain ATCC 27329 / DSM 1819 / JCM 2831 / NBRC 15690 / NCIMB 10815 / 0-1).